A 564-amino-acid chain; its full sequence is Keratin, type II cytoskeletal 6A (564 aa).

Positions 1–11 (MASTSTTIRSH) are enriched in low complexity. Positions 1–23 (MASTSTTIRSHSSSRRGFSANSA) are disordered. An N-acetylalanine modification is found at Ala2. A head region spans residues 2–162 (ASTSTTIRSH…DPTIQRVRAE (161 aa)). Positions 163–198 (EREQIKTLNNKFASFIDKVRFLEQQNKVLETKWTLL) are coil 1A. The IF rod domain maps to 163-476 (EREQIKTLNN…KLLEGEECRL (314 aa)). The segment at 199-217 (QEQGTKTVRQNLEPLFEQY) is linker 1. The coil 1B stretch occupies residues 218 to 309 (INNLRRQLDS…ALYDAELSQM (92 aa)). Residues 310–333 (QTHISDTSVVLSMDNNRNLDLDSI) form a linker 12 region. Residues 334 to 472 (IAEVKAQYEE…ATYRKLLEGE (139 aa)) are coil 2. Positions 473–564 (ECRLNGEGVG…SSSSRKSYKH (92 aa)) are tail.

This sequence belongs to the intermediate filament family. In terms of assembly, heterodimer of a type I and a type II keratin. KRT6 isomers associate with KRT16 and/or KRT17. Interacts with TCHP. As to expression, expressed in the corneal epithelium (at protein level).

Epidermis-specific type I keratin involved in wound healing. Involved in the activation of follicular keratinocytes after wounding, while it does not play a major role in keratinocyte proliferation or migration. Participates in the regulation of epithelial migration by inhibiting the activity of SRC during wound repair. This chain is Keratin, type II cytoskeletal 6A (KRT6A), found in Homo sapiens (Human).